Consider the following 142-residue polypeptide: Ribosome-binding factor A (142 aa).

Residues 118–142 form a disordered region; that stretch reads DEAKQQEHGTVENAKQDGDKAEDDK.

This sequence belongs to the RbfA family. Monomer. Binds 30S ribosomal subunits, but not 50S ribosomal subunits or 70S ribosomes.

The protein localises to the cytoplasm. One of several proteins that assist in the late maturation steps of the functional core of the 30S ribosomal subunit. Associates with free 30S ribosomal subunits (but not with 30S subunits that are part of 70S ribosomes or polysomes). Required for efficient processing of 16S rRNA. May interact with the 5'-terminal helix region of 16S rRNA. The sequence is that of Ribosome-binding factor A from Shewanella piezotolerans (strain WP3 / JCM 13877).